We begin with the raw amino-acid sequence, 230 residues long: Sugar fermentation stimulation protein homolog (230 aa).

Belongs to the SfsA family.

This is Sugar fermentation stimulation protein homolog from Pelobacter propionicus (strain DSM 2379 / NBRC 103807 / OttBd1).